Here is a 591-residue protein sequence, read N- to C-terminus: Probable lysosomal cobalamin transporter (591 aa).

5 consecutive transmembrane segments (helical) span residues 8–28, 39–59, 95–115, 144–164, and 198–218; these read LIWV…STFV, AAVT…VLLI, IVYY…IPFT, WTLG…FVPF, and FLIT…MALL. The disordered stretch occupies residues 238 to 266; sequence TASQLETNRERQRQLEGRNEGREGGLDSR. A compositionally biased stretch (basic and acidic residues) spans 244 to 266; that stretch reads TNRERQRQLEGRNEGREGGLDSR. 4 helical membrane passes run 315 to 335, 378 to 398, 422 to 442, and 509 to 529; these read LIGG…MLIT, VLFL…IATA, MATV…AMVV, and FFGI…LIVF.

The protein belongs to the LIMR family. LMBRD1 subfamily.

The protein localises to the lysosome membrane. Functionally, probable lysosomal cobalamin transporter. Required to export cobalamin from lysosomes allowing its conversion to cofactors. The chain is Probable lysosomal cobalamin transporter from Pyrenophora tritici-repentis (strain Pt-1C-BFP) (Wheat tan spot fungus).